The sequence spans 1270 residues: Microtubule-associated tumor suppressor 1 (1270 aa).

The segment covering 1–14 (MTDDNSDDKIEDEL) has biased composition (acidic residues). Disordered stretches follow at residues 1 to 50 (MTDD…NSAN) and 184 to 236 (FHTA…VTPS). The span at 38–50 (NSSASSVNWNSAN) shows a compositional bias: low complexity. Thr186 bears the Phosphothreonine mark. Low complexity predominate over residues 197–211 (SGSTSSLSYSTWTSS). Positions 212-228 (HSDKTHARETTYDRESF) are enriched in basic and acidic residues. A phosphoserine mark is found at Ser381, Ser399, and Ser443. Disordered regions lie at residues 524–560 (DAALSKVTPRPQQTSASSPSSVNSRQQTVLSRTPRSD) and 592–622 (THSKNASHRVPRTTSAVKSNQEDVDKASSSN). Over residues 533-556 (RPQQTSASSPSSVNSRQQTVLSRT) the composition is skewed to polar residues. The residue at position 629 (Ser629) is a Phosphoserine. Polar residues-rich tracts occupy residues 701–710 (SKTTTTSGRN), 759–776 (VSSSGKPTSLKTAQSSWV), and 797–815 (TGSTPSIASTHSELSTYSN). The disordered stretch occupies residues 701 to 815 (SKTTTTSGRN…THSELSTYSN (115 aa)). Residues 940-1231 (IQHLLSEREE…RLSMENEELL (292 aa)) are a coiled coil. Phosphoserine is present on residues Ser1203, Ser1224, Ser1245, Ser1255, Ser1259, Ser1261, Ser1264, and Ser1268. Residues 1237-1270 (GDLCSPKRSPTSSAIPLQSPRNSGSFPSPSISPR) are disordered. Residues 1244–1270 (RSPTSSAIPLQSPRNSGSFPSPSISPR) show a composition bias toward polar residues.

The protein belongs to the MTUS1 family. As to quaternary structure, homodimer. Interacts with AGTR2. Interacts with PTPN6. Isoform 1 associates with microtubules. In terms of tissue distribution, ubiquitously expressed (at protein level). Highly expressed in brain. Down-regulated in ovarian carcinoma, pancreas carcinoma, colon carcinoma and head and neck squamous cell carcinoma (HNSCC). Isoform 1 is the major isoform in most peripheral tissues. Isoform 2 is abundant in most peripheral tissues. Isoform 3 is the major isoform in brain, female reproductive tissues, thyroid and heart. Within brain it is highly expressed in corpus callosum and pons. Isoform 6 is brain-specific, it is the major isoform in cerebellum and fetal brain.

It localises to the mitochondrion. The protein resides in the golgi apparatus. It is found in the cell membrane. The protein localises to the nucleus. Its subcellular location is the cytoplasm. It localises to the cytoskeleton. The protein resides in the microtubule organizing center. It is found in the centrosome. The protein localises to the spindle. In terms of biological role, cooperates with AGTR2 to inhibit ERK2 activation and cell proliferation. May be required for AGTR2 cell surface expression. Together with PTPN6, induces UBE2V2 expression upon angiotensin-II stimulation. Isoform 1 inhibits breast cancer cell proliferation, delays the progression of mitosis by prolonging metaphase and reduces tumor growth. This Homo sapiens (Human) protein is Microtubule-associated tumor suppressor 1 (MTUS1).